The chain runs to 246 residues: tRNA pseudouridine synthase A (246 aa).

The active-site Nucleophile is Asp-52. Tyr-111 serves as a coordination point for substrate.

This sequence belongs to the tRNA pseudouridine synthase TruA family. In terms of assembly, homodimer.

The catalysed reaction is uridine(38/39/40) in tRNA = pseudouridine(38/39/40) in tRNA. Formation of pseudouridine at positions 38, 39 and 40 in the anticodon stem and loop of transfer RNAs. The sequence is that of tRNA pseudouridine synthase A from Borreliella burgdorferi (strain ATCC 35210 / DSM 4680 / CIP 102532 / B31) (Borrelia burgdorferi).